We begin with the raw amino-acid sequence, 188 residues long: Apolipophorin-3 (188 aa).

Positions 1 to 17 (MVAKLFVLVACIALSHA) are cleaved as a signal peptide. Positions 18–22 (AMVRR) are excised as a propeptide.

It belongs to the insect apolipophorin-3 family. As to quaternary structure, equilibrium between a soluble monomer and a bound lipoprotein form. Apolipophorin-3 associates with lipophorin during lipid loading until each particle contains 9 or 14 molecules of apolipophorin-3. As to expression, expressed in fat body and secreted in hemolymph. Also expressed in ovary and testis at lower levels.

The protein localises to the secreted. In terms of biological role, assists in the loading of diacylglycerol, generated from triacylglycerol stores in the fat body through the action of adipokinetic hormone, into lipophorin, the hemolymph lipoprotein. It increases the lipid carrying capacity of lipophorin by covering the expanding hydrophobic surface resulting from diacylglycerol uptake. It thus plays a critical role in the transport of lipids during flight in several species of insects. The chain is Apolipophorin-3 from Spodoptera litura (Asian cotton leafworm).